An 87-amino-acid polypeptide reads, in one-letter code: Cell division topological specificity factor (87 aa).

It belongs to the MinE family.

Prevents the cell division inhibition by proteins MinC and MinD at internal division sites while permitting inhibition at polar sites. This ensures cell division at the proper site by restricting the formation of a division septum at the midpoint of the long axis of the cell. This is Cell division topological specificity factor from Chelativorans sp. (strain BNC1).